The sequence spans 407 residues: Betaine--homocysteine S-methyltransferase 1 (407 aa).

In terms of domain architecture, Hcy-binding spans 11–314 (KGILERLNAG…YHIRAIAEEL (304 aa)). N6-succinyllysine is present on residues Lys-40, Lys-93, and Lys-98. Position 217 (Cys-217) interacts with Zn(2+). N6-succinyllysine occurs at positions 232 and 241. Positions 299 and 300 each coordinate Zn(2+). Ser-330 is modified (phosphoserine). Residues Lys-340 and Lys-377 each carry the N6-succinyllysine modification.

In terms of assembly, homotetramer. Zn(2+) serves as cofactor.

Its subcellular location is the cytoplasm. The protein localises to the cytosol. The protein resides in the nucleus. It carries out the reaction L-homocysteine + glycine betaine = N,N-dimethylglycine + L-methionine. The protein operates within amine and polyamine degradation; betaine degradation; sarcosine from betaine: step 1/2. It participates in amino-acid biosynthesis; L-methionine biosynthesis via de novo pathway; L-methionine from L-homocysteine (BhmT route): step 1/1. Functionally, involved in the regulation of homocysteine metabolism. Converts betaine and homocysteine to dimethylglycine and methionine, respectively. This reaction is also required for the irreversible oxidation of choline. In Mus musculus (Mouse), this protein is Betaine--homocysteine S-methyltransferase 1 (Bhmt).